The chain runs to 88 residues: uncharacterized protein (88 aa).

The next 2 helical transmembrane spans lie at 13–33 and 62–82; these read FLAF…GWGP and WFNI…ITGI.

The protein resides in the cell membrane. This is an uncharacterized protein from Bacillus subtilis (strain 168).